We begin with the raw amino-acid sequence, 108 residues long: MNAENRNIAFNCQVSYFLAISSDLRIINDFVPFNLSFISSLGDESSSIFSSTISSLQFFSVFLRFVWLERLSSGTSIIFPLAQRVTTVFGAQVERTQAKFFYQDLMSL.

This is an uncharacterized protein from Saccharomyces cerevisiae (strain ATCC 204508 / S288c) (Baker's yeast).